The following is a 144-amino-acid chain: Putative pre-16S rRNA nuclease (144 aa).

Belongs to the YqgF nuclease family.

The protein localises to the cytoplasm. Functionally, could be a nuclease involved in processing of the 5'-end of pre-16S rRNA. This chain is Putative pre-16S rRNA nuclease, found in Oleidesulfovibrio alaskensis (strain ATCC BAA-1058 / DSM 17464 / G20) (Desulfovibrio alaskensis).